A 378-amino-acid chain; its full sequence is UPF0754 membrane protein BCAH820_0954 (378 aa).

2 helical membrane passes run 1 to 21 (MNIW…GGFT) and 357 to 377 (YLGA…LLFL).

The protein belongs to the UPF0754 family.

It localises to the cell membrane. In Bacillus cereus (strain AH820), this protein is UPF0754 membrane protein BCAH820_0954.